Here is a 304-residue protein sequence, read N- to C-terminus: Tritrans,polycis-undecaprenyl-diphosphate synthase (geranylgeranyl-diphosphate specific) (304 aa).

Asp33 is a catalytic residue. Asp33 is a Mg(2+) binding site. Substrate is bound by residues 34 to 37 (GNRR), Lys46, His50, and 78 to 80 (STE). The active-site Proton acceptor is Asn81. Residues Phe82, Arg84, Arg203, and 209 to 211 (RTS) contribute to the substrate site.

The protein belongs to the UPP synthase family. Homodimer. Mg(2+) is required as a cofactor.

The enzyme catalyses geranylgeranyl diphosphate + 7 isopentenyl diphosphate = tri-trans,hepta-cis-undecaprenyl diphosphate + 7 diphosphate. Functionally, catalyzes the sequential condensation of isopentenyl diphosphate (IPP) with geranylgeranyl diphosphate (GGPP) to yield (2Z,6Z,10Z,14Z,18Z,22Z,26Z,30E,34E,38E)-undecaprenyl diphosphate (tritrans,heptacis-UPP). It is probably the precursor of glycosyl carrier lipids. In Haloarcula marismortui (strain ATCC 43049 / DSM 3752 / JCM 8966 / VKM B-1809) (Halobacterium marismortui), this protein is Tritrans,polycis-undecaprenyl-diphosphate synthase (geranylgeranyl-diphosphate specific).